The chain runs to 82 residues: Small ribosomal subunit protein bS16 (82 aa).

The protein belongs to the bacterial ribosomal protein bS16 family.

In Clostridium botulinum (strain Okra / Type B1), this protein is Small ribosomal subunit protein bS16.